Reading from the N-terminus, the 391-residue chain is Putative gustatory receptor 98a (391 aa).

At 1 to 31 (MEQMSGELHAASLLYMRRLMKCLGMLPFGQN) the chain is on the cytoplasmic side. The chain crosses the membrane as a helical span at residues 32 to 52 (LFSKGFCYVLLFVSLGFSSYW). Topologically, residues 53–74 (RFSFDYEFDYDFLNDRFSSTID) are extracellular. A helical membrane pass occupies residues 75 to 95 (LSNFVALVLGHAIIVLELLWG). The Cytoplasmic portion of the chain corresponds to 96–128 (NCSKDVDRQLQAIHSQIKLQLGTSNSTDRVRRY). The helical transmembrane segment at 129 to 149 (CNWIYGSLIIRWLIFIVVTIY) threads the bilayer. Residues 150–173 (SNRALTINATYSELVFLARFSEFT) lie on the Extracellular side of the membrane. N-linked (GlcNAc...) asparagine glycosylation occurs at Asn-157. A helical transmembrane segment spans residues 174–194 (LYCAVILFIYQELIVGGSNVL). Over 195 to 239 (DELYRTRYEMWSIRRLSLQKLAKLQAIHNSLWQAIRCLECYFQLS) the chain is Cytoplasmic. Residues 240–260 (LITLLMKFFIDTSALPYWLYL) traverse the membrane as a helical segment. Residues 261–272 (SRVEHTRVAVQH) lie on the Extracellular side of the membrane. Residues 273 to 293 (YVATVECIKLLEIVVPCYLCT) form a helical membrane-spanning segment. The Cytoplasmic portion of the chain corresponds to 294–347 (RCDAMQRKFLSMFYTVTTDRRSSQLNAALRSLNLQLSQEKYKFSAGGMVDINTE). Residues 348 to 368 (MLGKFFFGMISYIVICIQFSI) traverse the membrane as a helical segment. The Extracellular portion of the chain corresponds to 369–391 (NFRAKKMSNEQMSQNITSTSAPI). A glycan (N-linked (GlcNAc...) asparagine) is linked at Asn-383.

The protein belongs to the insect chemoreceptor superfamily. Gustatory receptor (GR) family. Gr2a subfamily.

Its subcellular location is the cell membrane. Probable gustatory receptor which mediates acceptance or avoidance behavior, depending on its substrates. The sequence is that of Putative gustatory receptor 98a (Gr98a) from Drosophila melanogaster (Fruit fly).